A 101-amino-acid polypeptide reads, in one-letter code: Interleukin-8 (101 aa).

An N-terminal signal peptide occupies residues 1 to 22 (MNSKLAVALLATFLLSLTLCEA). Citrulline is present on Arg27. 2 disulfide bridges follow: Cys34-Cys61 and Cys36-Cys77.

The protein belongs to the intercrine alpha (chemokine CxC) family. Homodimer. Interacts with TNFAIP6 (via Link domain); this interaction interferes with chemokine binding to glycosaminoglycans. In terms of processing, citrullination at Arg-27 prevents proteolysis, and dampens tissue inflammation, it also enhances leukocytosis, possibly through impaired chemokine clearance from the blood circulation.

It is found in the secreted. Chemotactic factor that mediates inflammatory response by attracting neutrophils, basophils, and T-cells to clear pathogens and protect the host from infection. Also plays an important role in neutrophil activation. Released in response to an inflammatory stimulus, exerts its effect by binding to the G-protein-coupled receptors CXCR1 and CXCR2, primarily found in neutrophils, monocytes and endothelial cells. G-protein heterotrimer (alpha, beta, gamma subunits) constitutively binds to CXCR1/CXCR2 receptor and activation by IL8 leads to beta and gamma subunits release from Galpha (GNAI2 in neutrophils) and activation of several downstream signaling pathways including PI3K and MAPK pathways. The sequence is that of Interleukin-8 (CXCL8) from Oryctolagus cuniculus (Rabbit).